We begin with the raw amino-acid sequence, 200 residues long: Histone chaperone asf1a-B (200 aa).

This sequence belongs to the ASF1 family. Interacts with histone H3 (including both histone H3.1 and H3.3) and histone H4.

The protein resides in the nucleus. In terms of biological role, histone chaperone that facilitates histone deposition and histone exchange and removal during nucleosome assembly and disassembly. The polypeptide is Histone chaperone asf1a-B (asf1ab) (Xenopus laevis (African clawed frog)).